We begin with the raw amino-acid sequence, 434 residues long: Histidinol dehydrogenase (434 aa).

NAD(+)-binding residues include tyrosine 130, glutamine 188, and asparagine 211. Substrate-binding residues include serine 237, glutamine 259, and histidine 262. The Zn(2+) site is built by glutamine 259 and histidine 262. Active-site proton acceptor residues include glutamate 326 and histidine 327. Residues histidine 327, aspartate 360, glutamate 414, and histidine 419 each contribute to the substrate site. Aspartate 360 lines the Zn(2+) pocket. Position 419 (histidine 419) interacts with Zn(2+).

This sequence belongs to the histidinol dehydrogenase family. In terms of assembly, homodimer. Zn(2+) is required as a cofactor.

It catalyses the reaction L-histidinol + 2 NAD(+) + H2O = L-histidine + 2 NADH + 3 H(+). It functions in the pathway amino-acid biosynthesis; L-histidine biosynthesis; L-histidine from 5-phospho-alpha-D-ribose 1-diphosphate: step 9/9. Catalyzes the sequential NAD-dependent oxidations of L-histidinol to L-histidinaldehyde and then to L-histidine. The sequence is that of Histidinol dehydrogenase from Escherichia coli (strain K12).